The chain runs to 99 residues: Antitoxin VapB47 (99 aa).

The protein belongs to the phD/YefM antitoxin family.

Antitoxin component of a type II toxin-antitoxin (TA) system. The chain is Antitoxin VapB47 (vapB47) from Mycobacterium tuberculosis (strain CDC 1551 / Oshkosh).